A 261-amino-acid polypeptide reads, in one-letter code: Carbonic anhydrase 1 (261 aa).

Residues M1 to P31 form a disordered region. Residue A2 is modified to N-acetylalanine. The Alpha-carbonic anhydrase domain occupies P4–F261. H65 serves as the catalytic Proton donor/acceptor. H95, H97, and H120 together coordinate Zn(2+). Substrate-binding positions include T200 and T200–H201. Positions V240 to F261 are disordered.

The protein belongs to the alpha-carbonic anhydrase family. Requires Zn(2+) as cofactor.

Its subcellular location is the cytoplasm. It catalyses the reaction hydrogencarbonate + H(+) = CO2 + H2O. It carries out the reaction urea = cyanamide + H2O. Inhibited by acetazolamide. Catalyzes the reversible hydration of carbon dioxide. Can hydrate cyanamide to urea. This Gorilla gorilla gorilla (Western lowland gorilla) protein is Carbonic anhydrase 1 (CA1).